Consider the following 330-residue polypeptide: Ketol-acid reductoisomerase (NADP(+)) (330 aa).

One can recognise a KARI N-terminal Rossmann domain in the interval 2–182 (ARMYYDADAN…GGTRAGILET (181 aa)). NADP(+) contacts are provided by residues 25 to 28 (YGSQ), Ser-51, Ser-53, and 83 to 86 (DEFQ). The active site involves His-108. An NADP(+)-binding site is contributed by Gly-134. Residues 183–328 (SFREETETDL…KDLRAMFSWL (146 aa)) form the KARI C-terminal knotted domain. Residues Asp-191, Glu-195, Glu-227, and Glu-231 each coordinate Mg(2+). A substrate-binding site is contributed by Ser-252.

The protein belongs to the ketol-acid reductoisomerase family. It depends on Mg(2+) as a cofactor.

The enzyme catalyses (2R)-2,3-dihydroxy-3-methylbutanoate + NADP(+) = (2S)-2-acetolactate + NADPH + H(+). The catalysed reaction is (2R,3R)-2,3-dihydroxy-3-methylpentanoate + NADP(+) = (S)-2-ethyl-2-hydroxy-3-oxobutanoate + NADPH + H(+). It functions in the pathway amino-acid biosynthesis; L-isoleucine biosynthesis; L-isoleucine from 2-oxobutanoate: step 2/4. Its pathway is amino-acid biosynthesis; L-valine biosynthesis; L-valine from pyruvate: step 2/4. Functionally, involved in the biosynthesis of branched-chain amino acids (BCAA). Catalyzes an alkyl-migration followed by a ketol-acid reduction of (S)-2-acetolactate (S2AL) to yield (R)-2,3-dihydroxy-isovalerate. In the isomerase reaction, S2AL is rearranged via a Mg-dependent methyl migration to produce 3-hydroxy-3-methyl-2-ketobutyrate (HMKB). In the reductase reaction, this 2-ketoacid undergoes a metal-dependent reduction by NADPH to yield (R)-2,3-dihydroxy-isovalerate. The sequence is that of Ketol-acid reductoisomerase (NADP(+)) from Synechococcus sp. (strain ATCC 27144 / PCC 6301 / SAUG 1402/1) (Anacystis nidulans).